A 496-amino-acid chain; its full sequence is Cyclin-dependent kinase 16 (496 aa).

A disordered region spans residues 1-97 (MDRMKKIKRQ…TSSDEVQSPV (97 aa)). Phosphoserine; by BRSK2 is present on serine 12. 7 positions are modified to phosphoserine: serine 36, serine 42, serine 64, serine 65, serine 78, serine 82, and serine 89. Residues 69-78 (IVHEDLKMGS) show a composition bias toward basic and acidic residues. Over residues 83-93 (DQASATSSDEV) the composition is skewed to polar residues. The residue at position 95 (serine 95) is a Phosphoserine; by CDK5. Phosphoserine is present on residues serine 110, serine 119, serine 138, serine 146, serine 153, and serine 155. One can recognise a Protein kinase domain in the interval 165-446 (YIKLDKLGEG…AEDAMKHPFF (282 aa)). ATP-binding positions include 171–179 (LGEGTYATV) and lysine 194. Threonine 175 is modified (phosphothreonine). Residue aspartate 286 is the Proton acceptor of the active site. Position 380 is a phosphothreonine (threonine 380). Phosphoserine is present on residues serine 391, serine 478, and serine 480.

It belongs to the protein kinase superfamily. CMGC Ser/Thr protein kinase family. CDC2/CDKX subfamily. In terms of assembly, found in a complex containing CABLES1, CDK17 and TDRD7. Interacts with BRSK2. Identified in a complex with NSF, syntaxin-1, synaptotagmin, SYN1, SYP and CDK5R1. Interacts with YWHAH, YWHAQ and YWHAZ. Interacts with CCNY; this interaction increases the CDK16 kinase activity. Interacts with CCNYL1; this interaction mutually increases the stability of CDK16 and CCNYL1 and increases the kinase activity of CDK16. Interacts with NSF. In terms of processing, phosphorylation of CDK16 is essential for the binding of CCNY, but also essential for the regulation of CDK16 kinase activity. Phosphorylation of CDK16 is essential for the binding of CCNYl1, but also essential for the regulation of CDK16 kinase activity. Ser-146 and Ser-153 are the most critical sites for the binding of CCNYL1 and for modulating CDK16 kinase activity. Phosphorylation at Ser-153 inhibits kinase activity. Detected in pancreas islets (at protein level). Detected in brain and pancreas.

Its subcellular location is the cytoplasm. The protein resides in the cytoplasmic vesicle. The protein localises to the secretory vesicle. It localises to the cell membrane. It is found in the synapse. Its subcellular location is the synaptosome. The enzyme catalyses L-seryl-[protein] + ATP = O-phospho-L-seryl-[protein] + ADP + H(+). It carries out the reaction L-threonyl-[protein] + ATP = O-phospho-L-threonyl-[protein] + ADP + H(+). In terms of biological role, protein kinase that plays a role in vesicle-mediated transport processes and exocytosis. Regulates GH1 release by brain neurons. Phosphorylates NSF, and thereby regulates NSF oligomerization. Required for normal spermatogenesis. Regulates neuron differentiation and dendrite development. Plays a role in the regulation of insulin secretion in response to changes in blood glucose levels. Can phosphorylate CCNY at 'Ser-336' (in vitro). The chain is Cyclin-dependent kinase 16 (CDK16) from Homo sapiens (Human).